A 134-amino-acid polypeptide reads, in one-letter code: Lymphocyte antigen 6I (134 aa).

The first 21 residues, 1–21, serve as a signal peptide directing secretion; that stretch reads MDTSHAIKSCVLILLVTLLCA. Positions 27 to 105 constitute a UPAR/Ly6 domain; it reads LECYQCYGVP…ISCCQEDLCN (79 aa). Intrachain disulfides connect C29/C53, C32/C41, C46/C74, C78/C98, and C99/C104. The N-linked (GlcNAc...) asparagine glycan is linked to N95. Residue G112 is the site of GPI-anchor amidated glycine attachment. A propeptide spans 113 to 134 (removed in mature form); that stretch reads SSWTTAGVLLFSLGSVLLQTLM.

As to expression, expressed in hematopoietic tissue (spleen, thymus, bone marrow). Also found in peritoneal macrophages, peripheral blood leukocytes, liver, heart, brain, kidney and lung.

It localises to the cell membrane. The polypeptide is Lymphocyte antigen 6I (Ly6i) (Mus musculus (Mouse)).